A 269-amino-acid polypeptide reads, in one-letter code: MNPLHATVLGAIQGLTEVLPVSSSAHLILIPWLFGWPESGITFDVALHLGTLIALALYFRRDIAELVVNALSGLTGGAHSSATRLPWYIIAGCVPAAIVGKTLEEPIEAIFRANPAIIAAFLIGFGLLLALADTLGSKKSRMDQIDLKNAMMIGLAQCLALLPGVSRSGITITAALFLGFSRETAARFSFLLSLPIVAGAALLKVGHLVRHGVPEGELQPLLIGVGVSAVFGYVSVALLLKLVQRYSLYPFVWYRLLAGAGVLLFIFNQ.

The next 7 membrane-spanning stretches (helical) occupy residues 40 to 59 (GITF…ALYF), 87 to 107 (WYII…EEPI), 116 to 136 (AIIA…DTLG), 160 to 180 (ALLP…FLGF), 188 to 208 (FSFL…VGHL), 220 to 240 (PLLI…ALLL), and 247 to 267 (SLYP…LFIF).

The protein belongs to the UppP family.

It localises to the cell inner membrane. The catalysed reaction is di-trans,octa-cis-undecaprenyl diphosphate + H2O = di-trans,octa-cis-undecaprenyl phosphate + phosphate + H(+). Functionally, catalyzes the dephosphorylation of undecaprenyl diphosphate (UPP). Confers resistance to bacitracin. The chain is Undecaprenyl-diphosphatase from Geobacter metallireducens (strain ATCC 53774 / DSM 7210 / GS-15).